The following is a 185-amino-acid chain: Imidazoleglycerol-phosphate dehydratase (185 aa).

This sequence belongs to the imidazoleglycerol-phosphate dehydratase family.

It localises to the cytoplasm. The catalysed reaction is D-erythro-1-(imidazol-4-yl)glycerol 3-phosphate = 3-(imidazol-4-yl)-2-oxopropyl phosphate + H2O. It participates in amino-acid biosynthesis; L-histidine biosynthesis; L-histidine from 5-phospho-alpha-D-ribose 1-diphosphate: step 6/9. In Pyrobaculum arsenaticum (strain DSM 13514 / JCM 11321 / PZ6), this protein is Imidazoleglycerol-phosphate dehydratase.